The chain runs to 358 residues: WD repeat-containing protein 53 (358 aa).

WD repeat units follow at residues 8–46 (GHSS…LGHT), 92–131 (VNEE…ISRS), 134–174 (RHSN…PLWI), 195–234 (LNPA…CEQE), and 239–278 (GHSL…EKKH). Over residues 278–294 (HKSPTKHTHRKKTKRAA) the composition is skewed to basic residues. Residues 278-309 (HKSPTKHTHRKKTKRAAYTKQGGGTHASVTGE) are disordered.

Belongs to the WD repeat WDR53 family.

The sequence is that of WD repeat-containing protein 53 (WDR53) from Bos taurus (Bovine).